The primary structure comprises 633 residues: Threonine--tRNA ligase (633 aa).

The region spanning 1-61 (MINVYFSDNS…TEDCKFEVIT (61 aa)) is the TGS domain. Residues 242–533 (DHRKIGKELE…LIEHHSGKLP (292 aa)) are catalytic. Residues cysteine 333, histidine 384, and histidine 510 each coordinate Zn(2+).

This sequence belongs to the class-II aminoacyl-tRNA synthetase family. Homodimer. It depends on Zn(2+) as a cofactor.

The protein localises to the cytoplasm. It carries out the reaction tRNA(Thr) + L-threonine + ATP = L-threonyl-tRNA(Thr) + AMP + diphosphate + H(+). Its function is as follows. Catalyzes the attachment of threonine to tRNA(Thr) in a two-step reaction: L-threonine is first activated by ATP to form Thr-AMP and then transferred to the acceptor end of tRNA(Thr). Also edits incorrectly charged L-seryl-tRNA(Thr). The polypeptide is Threonine--tRNA ligase (Ehrlichia ruminantium (strain Welgevonden)).